The chain runs to 1141 residues: MPEAKPAAKKAPKGKDAPKGAPKEAPPKEAPAEAPKEAPPEDQSPTAEEPTGVFLKKPDSVSVETGKDAVVVAKVNGKELPDKPTIKWFKGKWLELGSKSGARFSFKESHNSASNVYTVELHIGKVVLGDRGYYRLEVKAKDTCDSCGFNIDVEAPRQDASGQSLESFKRTSEKKSDTAGELDFSGLLKKREVVEEEKKKKKKDDDDLGIPPEIWELLKGAKKSEYEKIAFQYGITDLRGMLKRLKKAKVEVKKSAAFTKKLDPAYQVDRGNKIKLMVEISDPDLTLKWFKNGQEIKPSSKYVFENVGKKRILTINKCTLADDAAYEVAVKDEKCFTELFVKEPPVLIVTPLEDQQVFVGDRVEMAVEVSEEGAQVMWMKDGVELTREDSFKARYRFKKDGKRHILIFSDVVQEDRGRYQVITNGGQCEAELIVEEKQLEVLQDIADLTVKASEQAVFKCEVSDEKVTGKWYKNGVEVRPSKRITISHVGRFHKLVIDDVRPEDEGDYTFVPDGYALSLSAKLNFLEIKVEYVPKQEPPKIHLDCSGKTSENAIVVVAGNKLRLDVSITGEPPPVATWLKGDEVFTTTEGRTRIEKRVDCSSFVIESAQREDEGRYTIKVTNPVGEDVASIFLQVVDVPDPPEAVRITSVGEDWAILVWEPPMYDGGKPVTGYLVERKKKGSQRWMKLNFEVFTETTYESTKMIEGILYEMRVFAVNAIGVSQPSMNTKPFMPIAPTSEPLHLIVEDVTDTTTTLKWRPPNRIGAGGIDGYLVEYCLEGSEEWVPANTEPVERCGFTVKNLPTGARILFRVVGVNIAGRSEPATLAQPVTIREIAEPPKIRLPRHLRQTYIRKVGEQLNLVVPFQGKPRPQVVWTKGGAPLDTSRVHVRTSDFDTVFFVRQAARSDSGEYELSVQIENMKDTATIRIRVVEKAGPPINVMVKEVWGTNALVEWQAPKDDGNSEIMGYFVQKADKKTMEWFNVYERNRHTSCTVSDLIVGNEYYFRVYTENICGLSDSPGVSKNTARILKTGITFKPFEYKEHDFRMAPKFLTPLIDRVVVAGYSAALNCAVRGHPKPKVVWMKNKMEIREDPKFLITNYQGVLTLNIRRPSPFDAGTYTCRAVNELGEALAECKLEVRVPQ.

The disordered stretch occupies residues 1 to 62; it reads MPEAKPAAKK…VFLKKPDSVS (62 aa). Residues 13–39 show a composition bias toward basic and acidic residues; it reads KGKDAPKGAPKEAPPKEAPAEAPKEAP. Ig-like C2-type domains are found at residues 50–153, 255–344, 345–437, 438–538, and 539–638; these read PTGV…NIDV, SAAF…VKEP, PVLI…VEEK, QLEV…KQEP, and PKIH…VVDV. 2 consecutive Fibronectin type-III domains span residues 641 to 737 and 739 to 834; these read PPEA…IAPT and EPLH…IREI. The 95-residue stretch at 838–932 folds into the Ig-like C2-type 6 domain; that stretch reads PKIRLPRHLR…ATIRIRVVEK (95 aa). Positions 935–1030 constitute a Fibronectin type-III 3 domain; it reads PPINVMVKEV…SKNTARILKT (96 aa). Residues 1048–1141 form the Ig-like C2-type 7 domain; it reads PKFLTPLIDR…ECKLEVRVPQ (94 aa).

This sequence belongs to the immunoglobulin superfamily. MyBP family.

Functionally, thick filament-associated protein located in the crossbridge region of vertebrate striated muscle a bands. In vitro it binds MHC, F-actin and native thin filaments, and modifies the activity of actin-activated myosin ATPase. It may modulate muscle contraction or may play a more structural role. The protein is Myosin-binding protein C, fast-type (MYBPC2) of Homo sapiens (Human).